The sequence spans 542 residues: LysM domain-containing protein ARB_00327 (542 aa).

An N-terminal signal peptide occupies residues methionine 1–alanine 35. N-linked (GlcNAc...) asparagine glycans are attached at residues asparagine 218, asparagine 298, asparagine 381, and asparagine 415. Positions arginine 264–valine 310 constitute a LysM 1 domain. Residues aspartate 439–alanine 484 are disordered. Residues proline 443–serine 472 are compositionally biased toward low complexity. Residues lysine 487 to valine 534 form the LysM 2 domain.

It localises to the secreted. Its function is as follows. Might have a role in sequestration of chitin oligosaccharides (breakdown products of fungal cell walls that are released during invasion and act as triggers of host immunity) to dampen host defense. The protein is LysM domain-containing protein ARB_00327 of Arthroderma benhamiae (strain ATCC MYA-4681 / CBS 112371) (Trichophyton mentagrophytes).